A 377-amino-acid chain; its full sequence is MSLEPFSKSEALTFGVELELQLVNRHDYDLASASPDLLRMLKGKEYPGDIKPEITDSMIEISTGICHSHDEALWQLREMRDRMAEAATALNIGICGGGTHPFQQWSQRQISQSPRYQYISDLYGYLAKQFTVFGQHVHIGCPNPDDALYLLHAMSRYVPHFIALAASSPFVQGVDTGFASARMNSVSAFPMSGRAPFVLTWDAFIAYFDKMHATGVIESMKDFYWDIRPKPEFGTIEVRVMDTPLTVERAAAIAAYIQALGRWLLLDRPFMPVEDDYLVYTFNRFQACRFGLAGEYVDPATGNRGALADHILETSKLLSAHAEALSSEGALDMVREVVEARDADAEWIRAAQRETRNLHETVRRGCGRWTQAATQPA.

It belongs to the glutamate--cysteine ligase type 2 family. YbdK subfamily.

It catalyses the reaction L-cysteine + L-glutamate + ATP = gamma-L-glutamyl-L-cysteine + ADP + phosphate + H(+). In terms of biological role, ATP-dependent carboxylate-amine ligase which exhibits weak glutamate--cysteine ligase activity. This Ralstonia pickettii (strain 12J) protein is Putative glutamate--cysteine ligase 2.